A 70-amino-acid polypeptide reads, in one-letter code: Brevinin-1MT1 (70 aa).

The N-terminal stretch at 1-22 (MFTLKKSLLLLFFLGTINLSLC) is a signal peptide. The propeptide occupies 23–44 (EQERDADEEERRDDDEMDVEVE). Cysteine 64 and cysteine 70 form a disulfide bridge.

Belongs to the frog skin active peptide (FSAP) family. Brevinin subfamily. Expressed by the skin glands.

The protein localises to the secreted. Its function is as follows. Antimicrobial peptide with activity against a variety of Gram-negative and Gram-positive bacteria and against fungi. Shows strong hemolytic activity against human erythrocytes. This is Brevinin-1MT1 from Amolops mantzorum (Sichuan torrent frog).